We begin with the raw amino-acid sequence, 647 residues long: Threonine--tRNA ligase (647 aa).

Residues 1–61 (MIKITFPDGA…EEDGSIEIVT (61 aa)) form the TGS domain. Positions 240–538 (DHRKLGKELD…LIETYKGAFP (299 aa)) are catalytic. Zn(2+) contacts are provided by Cys-334, His-385, and His-515.

This sequence belongs to the class-II aminoacyl-tRNA synthetase family. In terms of assembly, homodimer. It depends on Zn(2+) as a cofactor.

The protein localises to the cytoplasm. The enzyme catalyses tRNA(Thr) + L-threonine + ATP = L-threonyl-tRNA(Thr) + AMP + diphosphate + H(+). Its function is as follows. Catalyzes the attachment of threonine to tRNA(Thr) in a two-step reaction: L-threonine is first activated by ATP to form Thr-AMP and then transferred to the acceptor end of tRNA(Thr). Also edits incorrectly charged L-seryl-tRNA(Thr). The sequence is that of Threonine--tRNA ligase from Streptococcus pyogenes serotype M18 (strain MGAS8232).